The following is a 392-amino-acid chain: MSSDDERDEKELSLTSPEVVTKYKSAAEIVNKALQVVLAECKPKAKIVDICEKGDSFIKEQTASMYKNSKKKIERGVAFPTCISVNNTVGHFSPLASDESVLEDGDMVKIDMGCHIDGFIALVGHTHVLQEGPLSGRKADVIAAANTAADVALRLVRPGKKNTDVTEAIQKVAAAYDCKIVEGVLSHQLKQHVIDGNKVVLSVSSPETTVDEVEFEENEVYAIDIVASTGDGKPKLLDEKQTTIYKKDESVNYQLKMKASRFIISEIKQNFPRMPFTARSLEEKRARLGLVECVNHGHLQPYPVLYEKPGDFVAQIKFTVLLMPNGSDRITSHTLQELPKKTIEDPEIKGWLALGIKKKKGGGKKKKAQKAGEKGEASTEAEPMDASSNAQE.

Necessary for nucleolar localization stretches follow at residues 1 to 50 (MSSD…IVDI) and 298 to 392 (HLQP…NAQE). The interval 48–56 (VDICEKGDS) is RNA-binding. Positions 355–372 (GIKKKKGGGKKKKAQKAG) are interaction with RNA. The Nuclear localization signal signature appears at 357-367 (KKKKGGGKKKK). Basic residues predominate over residues 358–369 (KKKGGGKKKKAQ). The tract at residues 358–392 (KKKGGGKKKKAQKAGEKGEASTEAEPMDASSNAQE) is disordered.

The protein belongs to the peptidase M24 family. In terms of assembly, component of a ribonucleoprotein complex. Interacts with REIL1 and REIL2. In terms of tissue distribution, strongly expressed in calls, roots and flowers, to a lower extent, in stems and siliques, but hardly detectable in leaves.

The protein localises to the nucleus. Its function is as follows. Binds RNA. Associates with 28S, 18S and 5.8S mature rRNAs, several rRNA precursors and probably U3 small nucleolar RNA. May be involved in regulation of intermediate and late steps of rRNA processing. May be involved in ribosome assembly. Required for expression of cell cycle genes such as CYCD3-1, RNR2A and CDKB1-1. Promotes, in a dose- and auxin-dependent manner, organ growth by stimulating both cell proliferation and expansion, via the regulation of RBR1 levels. This is ERBB-3 BINDING PROTEIN 1 from Arabidopsis thaliana (Mouse-ear cress).